The sequence spans 503 residues: Probable cytosol aminopeptidase (503 aa).

2 residues coordinate Mn(2+): K274 and D279. K286 is an active-site residue. The Mn(2+) site is built by D297, D356, and E358. Residue R360 is part of the active site.

This sequence belongs to the peptidase M17 family. Requires Mn(2+) as cofactor.

The protein resides in the cytoplasm. The catalysed reaction is Release of an N-terminal amino acid, Xaa-|-Yaa-, in which Xaa is preferably Leu, but may be other amino acids including Pro although not Arg or Lys, and Yaa may be Pro. Amino acid amides and methyl esters are also readily hydrolyzed, but rates on arylamides are exceedingly low.. The enzyme catalyses Release of an N-terminal amino acid, preferentially leucine, but not glutamic or aspartic acids.. Functionally, presumably involved in the processing and regular turnover of intracellular proteins. Catalyzes the removal of unsubstituted N-terminal amino acids from various peptides. The sequence is that of Probable cytosol aminopeptidase from Burkholderia ambifaria (strain MC40-6).